A 950-amino-acid polypeptide reads, in one-letter code: Leucine--tRNA ligase (950 aa).

The 'HIGH' region motif lies at 72–83; that stretch reads PYPSGEGLHVGH. The short motif at 722–726 is the 'KMSKS' region element; that stretch reads KIGKS. Residue K725 participates in ATP binding.

Belongs to the class-I aminoacyl-tRNA synthetase family.

The protein localises to the cytoplasm. It catalyses the reaction tRNA(Leu) + L-leucine + ATP = L-leucyl-tRNA(Leu) + AMP + diphosphate. This Mycobacterium sp. (strain KMS) protein is Leucine--tRNA ligase.